The chain runs to 479 residues: MDPSRHTHVMLVSFPGQGHVNPLLRLGKLIASKGLLVTFVTTEKPWGKKMRQANKIQDGVLKPVGLGFIRFEFFSDGFADDDEKRFDFDAFRPHLEAVGKQEIKNLVKRYNKEPVTCLINNAFVPWVCDVAEELHIPSAVLWVQSCACLTAYYYYHHRLVKFPTKTEPDISVEIPCLPLLKHDEIPSFLHPSSPYTAFGDIILDQLKRFENHKSFYLFIDTFRELEKDIMDHMSQLCPQAIISPVGPLFKMAQTLSSDVKGDISEPASDCMEWLDSREPSSVVYISFGTIANLKQEQMEEIAHGVLSSGLSVLWVVRPPMEGTFVEPHVLPRELEEKGKIVEWCPQERVLAHPAIACFLSHCGWNSTMEALTAGVPVVCFPQWGDQVTDAVYLADVFKTGVRLGRGAAEEMIVSREVVAEKLLEATVGEKAVELRENARRWKAEAEAAVADGGSSDMNFKEFVDKLVTKHVTREDNGEH.

The Proton acceptor role is filled by H19. Residue H19 participates in an anthocyanidin binding. 6 residues coordinate UDP-alpha-D-glucose: Q346, H361, W364, N365, S366, and E369. Position 384 (G384) interacts with an anthocyanidin. UDP-alpha-D-glucose-binding residues include D385 and Q386.

The protein belongs to the UDP-glycosyltransferase family.

The catalysed reaction is (E)-4-coumarate + UDP-alpha-D-glucose = 4-O-(beta-D-glucosyl)-trans-4-coumarate + UDP + H(+). The enzyme catalyses (E)-ferulate + UDP-alpha-D-glucose = 1-O-[(E)-feruloyl]-beta-D-glucose + UDP. It catalyses the reaction (E)-caffeate + UDP-alpha-D-glucose = 1-O-[(E)-caffeoyl]-beta-D-glucose + UDP. It carries out the reaction (E)-sinapate + UDP-alpha-D-glucose = 1-O-(trans-sinapoyl)-beta-D-glucose + UDP. The catalysed reaction is (E)-cinnamate + UDP-alpha-D-glucose = 1-O-(trans-cinnamoyl)-beta-D-glucose + UDP. Its function is as follows. UDP-glucosyltransferase that forms glucose esters with phenylpropanoids. Glucosylates 4-coumarate, ferulate, caffeate, sinapate and cinnamate. The sequence is that of UDP-glycosyltransferase 84A3 from Arabidopsis thaliana (Mouse-ear cress).